We begin with the raw amino-acid sequence, 387 residues long: 3-ketoacyl-CoA thiolase (387 aa).

C91 serves as the catalytic Acyl-thioester intermediate. Residues H343 and C373 each act as proton acceptor in the active site.

This sequence belongs to the thiolase-like superfamily. Thiolase family. Heterotetramer of two alpha chains (FadB) and two beta chains (FadA).

The protein localises to the cytoplasm. The enzyme catalyses an acyl-CoA + acetyl-CoA = a 3-oxoacyl-CoA + CoA. The protein operates within lipid metabolism; fatty acid beta-oxidation. Its function is as follows. Catalyzes the final step of fatty acid oxidation in which acetyl-CoA is released and the CoA ester of a fatty acid two carbons shorter is formed. This Shewanella sp. (strain MR-7) protein is 3-ketoacyl-CoA thiolase.